Consider the following 384-residue polypeptide: Sphingosine 1-phosphate receptor 4 (384 aa).

Over 1-50 the chain is Extracellular; it reads MNATGTPVAPESCQQLAAGGHSRLIVLHYNHSGRLAGRGGPEDGGLGALR. N-linked (GlcNAc...) asparagine glycosylation is found at N2 and N30. A helical transmembrane segment spans residues 51-71; that stretch reads GLSVAASCLVVLENLLVLAAI. Over 72 to 84 the chain is Cytoplasmic; that stretch reads TSHMRSRRWVYYC. The helical transmembrane segment at 85-105 threads the bilayer; the sequence is LVNITLSDLLTGAAYLANVLL. Over 106 to 117 the chain is Extracellular; the sequence is SGARTFRLAPAQ. A helical transmembrane segment spans residues 118 to 138; it reads WFLREGLLFTALAASTFSLLF. Residues 139 to 161 lie on the Cytoplasmic side of the membrane; sequence TAGERFATMVRPVAESGATKTSR. The helical transmembrane segment at 162-182 threads the bilayer; it reads VYGFIGLCWLLAALLGMLPLL. Topologically, residues 183 to 206 are extracellular; that stretch reads GWNCLCAFDRCSSLLPLYSKRYIL. Residues 207 to 227 traverse the membrane as a helical segment; the sequence is FCLVIFAGVLATIMGLYGAIF. The Cytoplasmic segment spans residues 228-252; sequence RLVQASGQKAPRPAARRKARRLLKT. The helical transmembrane segment at 253–273 threads the bilayer; sequence VLMILLAFLVCWGPLFGLLLA. The Extracellular portion of the chain corresponds to 274–288; sequence DVFGSNLWAQEYLRG. A helical transmembrane segment spans residues 289–309; sequence MDWILALAVLNSAVNPIIYSF. Topologically, residues 310 to 384 are cytoplasmic; that stretch reads RSREVCRAVL…LSSISSVRSI (75 aa). Residue C323 is the site of S-palmitoyl cysteine attachment.

It belongs to the G-protein coupled receptor 1 family. In terms of tissue distribution, specifically expressed in fetal and adult lymphoid and hematopoietic tissue as well as in lung. Considerable level of expression in adult and fetal spleen as well as adult peripheral leukocytes and lung. Lower expression in adult thymus, lymph node, bone marrow, and appendix as well as in fetal liver, thymus, and lung.

Its subcellular location is the cell membrane. Its function is as follows. Receptor for the lysosphingolipid sphingosine 1-phosphate (S1P). S1P is a bioactive lysophospholipid that elicits diverse physiological effect on most types of cells and tissues. May be involved in cell migration processes that are specific for lymphocytes. The sequence is that of Sphingosine 1-phosphate receptor 4 (S1PR4) from Homo sapiens (Human).